A 121-amino-acid polypeptide reads, in one-letter code: MELRDWLRVDVKAGKPLFDQLRTQVIDGVRAGALPPGTRLPTVRDLAGQLGVAANTVARAYRELESAAIVETRGRFGTFISRFDPTDAAMAAAAKEYVGVARALGLTKSDAMRYLTHVPDD.

The HTH gntR-type domain occupies 15–83; that stretch reads KPLFDQLRTQ…GRFGTFISRF (69 aa). The H-T-H motif DNA-binding region spans 43–62; the sequence is VRDLAGQLGVAANTVARAYR.

The protein localises to the cytoplasm. It is found in the secreted. The protein resides in the cell wall. Transcriptional regulator that modulates resistance to vancomycin and aminoglycosides. Negatively regulates the expression of several genes responsive to vancomycin, resulting in decreased susceptibility of bacteria to vancomycin. Negatively regulates the expression of genes encoding the ribosome binding protein Hsp, the small subunit of sulfate adenylyltransferase CysD, the L-lysine-epsilon aminotransferase LAT and the protease HtpX. Also modulates purine metabolism and aminoglycoside antibiotic resistance. Negatively regulates the expression of purine metabolism-related genes and the accumulation of purine metabolites, which affects aminoglycoside antibiotic resistance. The sequence is that of HTH-type transcriptional regulator Rv1152 from Mycobacterium tuberculosis (strain ATCC 25618 / H37Rv).